The following is a 55-amino-acid chain: Protein SOX-19 (55 aa).

The HMG box DNA-binding region spans 1–55; the sequence is MVWSQIERRKIMEQWPDMHNAEISKRLGKRWKLLPDYEKIPFIKEAERLRLKHMA.

It is found in the nucleus. In Mus musculus (Mouse), this protein is Protein SOX-19 (Sox19).